Here is a 497-residue protein sequence, read N- to C-terminus: Probable cytosol aminopeptidase (497 aa).

Mn(2+)-binding residues include lysine 264 and aspartate 269. Lysine 276 is an active-site residue. The Mn(2+) site is built by aspartate 287, aspartate 346, and glutamate 348. Arginine 350 is a catalytic residue.

Belongs to the peptidase M17 family. Mn(2+) is required as a cofactor.

The protein resides in the cytoplasm. The enzyme catalyses Release of an N-terminal amino acid, Xaa-|-Yaa-, in which Xaa is preferably Leu, but may be other amino acids including Pro although not Arg or Lys, and Yaa may be Pro. Amino acid amides and methyl esters are also readily hydrolyzed, but rates on arylamides are exceedingly low.. It catalyses the reaction Release of an N-terminal amino acid, preferentially leucine, but not glutamic or aspartic acids.. Presumably involved in the processing and regular turnover of intracellular proteins. Catalyzes the removal of unsubstituted N-terminal amino acids from various peptides. The protein is Probable cytosol aminopeptidase of Persephonella marina (strain DSM 14350 / EX-H1).